The following is a 361-amino-acid chain: Anhydro-N-acetylmuramic acid kinase (361 aa).

10-17 (GTSLDGVD) provides a ligand contact to ATP.

The protein belongs to the anhydro-N-acetylmuramic acid kinase family.

It catalyses the reaction 1,6-anhydro-N-acetyl-beta-muramate + ATP + H2O = N-acetyl-D-muramate 6-phosphate + ADP + H(+). It functions in the pathway amino-sugar metabolism; 1,6-anhydro-N-acetylmuramate degradation. It participates in cell wall biogenesis; peptidoglycan recycling. Catalyzes the specific phosphorylation of 1,6-anhydro-N-acetylmuramic acid (anhMurNAc) with the simultaneous cleavage of the 1,6-anhydro ring, generating MurNAc-6-P. Is required for the utilization of anhMurNAc either imported from the medium or derived from its own cell wall murein, and thus plays a role in cell wall recycling. In Gluconobacter oxydans (strain 621H) (Gluconobacter suboxydans), this protein is Anhydro-N-acetylmuramic acid kinase.